Consider the following 326-residue polypeptide: tRNA uridine(34) hydroxylase (326 aa).

The Rhodanese domain maps to 123 to 217 (SDPDVILVDT…YLEEVKQEES (95 aa)). Residue Cys177 is the Cysteine persulfide intermediate of the active site.

It belongs to the TrhO family.

The catalysed reaction is uridine(34) in tRNA + AH2 + O2 = 5-hydroxyuridine(34) in tRNA + A + H2O. Catalyzes oxygen-dependent 5-hydroxyuridine (ho5U) modification at position 34 in tRNAs. The polypeptide is tRNA uridine(34) hydroxylase (Shewanella denitrificans (strain OS217 / ATCC BAA-1090 / DSM 15013)).